The chain runs to 215 residues: High mobility group protein B1 (215 aa).

2–10 (GKGDPKKPR) is a binding site for heparin. The segment at 2-97 (GKGDPKKPRG…KFKDPNAPKR (96 aa)) is sufficient for interaction with HAVCR2. N6-acetyllysine occurs at positions 3, 7, 8, and 12. The segment at 3 to 15 (KGDPKKPRGKMSS) is LPS binding (delipidated). A DNA-binding region (HMG box 1) is located at residues 9–79 (PRGKMSSYAF…RYEREMKTYI (71 aa)). A Cysteine sulfonic acid (-SO3H); alternate modification is found at Cys23. Residues Cys23 and Cys45 are joined by a disulfide bond. Positions 27 to 43 (HKKKHPDASVNFSEFSK) match the Nuclear localization signal (NLS) 1 motif. Lys28, Lys29, and Lys30 each carry N6-acetyllysine. Lys28 participates in a covalent cross-link: Isoglutamyl lysine isopeptide (Lys-Gln) (interchain with Q-?). Residue Ser35 is modified to Phosphoserine. Lys43 is modified (N6-acetyllysine). Residues Lys43 and Lys44 each participate in an isoglutamyl lysine isopeptide (Lys-Gln) (interchain with Q-?) cross-link. A Cysteine sulfonic acid (-SO3H); alternate modification is found at Cys45. Lys68 participates in a covalent cross-link: Isoglutamyl lysine isopeptide (Lys-Gln) (interchain with Q-?). The tract at residues 76-95 (KTYIPPKGETKKKFKDPNAP) is disordered. The interval 80–96 (PPKGETKKKFKDPNAPK) is LPS binding (Lipid A). Basic and acidic residues predominate over residues 83 to 94 (GETKKKFKDPNA). The tract at residues 89–108 (FKDPNAPKRPPSAFFLFCSE) is cytokine-stimulating activity. Lys90 carries the N6-acetyllysine modification. Residues 95 to 163 (PKRPPSAFFL…KYEKDIAAYR (69 aa)) constitute a DNA-binding region (HMG box 2). Residue Ser100 is modified to Phosphoserine. Cys106 is subject to Cysteine sulfonic acid (-SO3H). 7 positions are modified to N6-acetyllysine: Lys127, Lys128, Lys141, Lys172, Lys173, Lys177, and Lys180. The tract at residues 150–183 (KLKEKYEKDIAAYRAKGKPDAAKKGVVKAEKSKK) is binding to AGER/RAGE. Over residues 161 to 179 (AYRAKGKPDAAKKGVVKAE) the composition is skewed to basic and acidic residues. Residues 161–215 (AYRAKGKPDAAKKGVVKAEKSKKKKEEEEDEEDEEDEEEEEDEEDEEEEEDDDDE) are disordered. Residues 178 to 184 (AEKSKKK) carry the Nuclear localization signal (NLS) 2 motif. Lys180 is covalently cross-linked (Isoglutamyl lysine isopeptide (Lys-Gln) (interchain with Q-?)). Ser181 is modified (ADP-ribosylserine). An N6-acetyllysine mark is found at Lys182, Lys183, Lys184, and Lys185. Residues Lys182, Lys183, and Lys184 each participate in an isoglutamyl lysine isopeptide (Lys-Gln) (interchain with Q-?) cross-link. The span at 187-215 (EEEDEEDEEDEEEEEDEEDEEEEEDDDDE) shows a compositional bias: acidic residues.

Belongs to the HMGB family. In terms of assembly, interacts (fully reduced HMGB1) with CXCL12; probably in a 1:2 ratio involving two molecules of CXCL12, each interacting with one HMG box of HMGB1; inhibited by glycyrrhizin. Associates with the TLR4:LY96 receptor complex. Component of the RAG complex composed of core components RAG1 and RAG2, and associated component HMGB1 or HMGB2. Interacts (in cytoplasm upon starvation) with BECN1; inhibits the interaction of BECN1 and BCL2 leading to promotion of autophagy. Interacts with KPNA1; involved in nuclear import. Interacts with AGER. Interacts with SREBF1, TLR2, TLR4, TLR9, PTPRZ1, APEX1, FEN1, POLB, TERT. Interacts with IL1B, MSH2, XPA, XPC, HNF1A, TP53. Interacts with CD24; the probable CD24:SIGLEC10 complex is proposed to inhibit HGMB1-mediated tissue damage immune response. Interacts with THBD; prevents HGMB1 interaction with ACER/RAGE and inhibits HGMB1 pro-inflammatory activity. Interacts with HAVCR2; impairs HMGB1 binding to B-DNA and likely HMGB1-mediated innate immune response. Interacts with XPO1; mediating nuclear export. Interacts with receptor RAGE/AGER. Phosphorylated at serine residues. Phosphorylation in both NLS regions is required for cytoplasmic translocation followed by secretion. In terms of processing, acetylated on multiple sites upon stimulation with LPS. Acetylation on lysine residues in the nuclear localization signals (NLS 1 and NLS 2) leads to cytoplasmic localization and subsequent secretion. Acetylation on Lys-3 results in preferential binding to DNA ends and impairs DNA bending activity. Post-translationally, reduction/oxidation of cysteine residues Cys-23, Cys-45 and Cys-106 and a possible intramolecular disulfide bond involving Cys-23 and Cys-45 give rise to different redox forms with specific functional activities in various cellular compartments: 1- fully reduced HMGB1 (HMGB1C23hC45hC106h), 2- disulfide HMGB1 (HMGB1C23-C45C106h) and 3- sulfonyl HMGB1 (HMGB1C23soC45soC106so). Poly-ADP-ribosylated by PARP1 when secreted following stimulation with LPS. In terms of processing, in vitro cleavage by CASP1 is liberating a HMG box 1-containing peptide which may mediate immunogenic activity; the peptide antagonizes apoptosis-induced immune tolerance. Can be proteolytically cleaved by a thrombin:thrombomodulin complex; reduces binding to heparin and pro-inflammatory activities. Post-translationally, forms covalent cross-links mediated by transglutaminase TGM2, between a glutamine and the epsilon-amino group of a lysine residue, forming homopolymers and heteropolymers.

It localises to the nucleus. It is found in the chromosome. The protein localises to the cytoplasm. The protein resides in the secreted. Its subcellular location is the cell membrane. It localises to the endosome. It is found in the endoplasmic reticulum-Golgi intermediate compartment. Multifunctional redox sensitive protein with various roles in different cellular compartments. In the nucleus is one of the major chromatin-associated non-histone proteins and acts as a DNA chaperone involved in replication, transcription, chromatin remodeling, V(D)J recombination, DNA repair and genome stability. Proposed to be an universal biosensor for nucleic acids. Promotes host inflammatory response to sterile and infectious signals and is involved in the coordination and integration of innate and adaptive immune responses. In the cytoplasm functions as a sensor and/or chaperone for immunogenic nucleic acids implicating the activation of TLR9-mediated immune responses, and mediates autophagy. Acts as a danger-associated molecular pattern (DAMP) molecule that amplifies immune responses during tissue injury. Released to the extracellular environment can bind DNA, nucleosomes, IL-1 beta, CXCL12, AGER isoform 2/sRAGE, lipopolysaccharide (LPS) and lipoteichoic acid (LTA), and activates cells through engagement of multiple surface receptors. In the extracellular compartment fully reduced HMGB1 (released by necrosis) acts as a chemokine, disulfide HMGB1 (actively secreted) as a cytokine, and sulfonyl HMGB1 (released from apoptotic cells) promotes immunological tolerance. Has proangiogenic activity. May be involved in platelet activation. Binds to phosphatidylserine and phosphatidylethanolamide. Bound to RAGE mediates signaling for neuronal outgrowth. May play a role in accumulation of expanded polyglutamine (polyQ) proteins. Functionally, nuclear functions are attributed to fully reduced HGMB1. Associates with chromatin and binds DNA with a preference to non-canonical DNA structures such as single-stranded DNA, DNA-containing cruciforms or bent structures, supercoiled DNA and ZDNA. Can bent DNA and enhance DNA flexibility by looping thus providing a mechanism to promote activities on various gene promoters by enhancing transcription factor binding and/or bringing distant regulatory sequences into close proximity. May be involved in nucleotide excision repair (NER), mismatch repair (MMR) and base excision repair (BER) pathways, and double strand break repair such as non-homologous end joining (NHEJ). Involved in V(D)J recombination by acting as a cofactor of the RAG complex: acts by stimulating cleavage and RAG protein binding at the 23 bp spacer of conserved recombination signal sequences (RSS). In vitro can displace histone H1 from highly bent DNA. Can restructure the canonical nucleosome leading to relaxation of structural constraints for transcription factor-binding. Enhances binding of sterol regulatory element-binding proteins (SREBPs) such as SREBF1 to their cognate DNA sequences and increases their transcriptional activities. Facilitates binding of TP53 to DNA. May be involved in mitochondrial quality control and autophagy in a transcription-dependent fashion implicating HSPB1. Can modulate the activity of the telomerase complex and may be involved in telomere maintenance. In terms of biological role, in the cytoplasm proposed to dissociate the BECN1:BCL2 complex via competitive interaction with BECN1 leading to autophagy activation. Involved in oxidative stress-mediated autophagy. Can protect BECN1 and ATG5 from calpain-mediated cleavage and thus proposed to control their proautophagic and proapoptotic functions and to regulate the extent and severity of inflammation-associated cellular injury. In myeloid cells has a protective role against endotoxemia and bacterial infection by promoting autophagy. Involved in endosomal translocation and activation of TLR9 in response to CpG-DNA in macrophages. Its function is as follows. In the extracellular compartment (following either active secretion or passive release)involved in regulation of the inflammatory response. Fully reduced HGMB1 (which subsequently gets oxidized after release) in association with CXCL12 mediates the recruitment of inflammatory cells during the initial phase of tissue injury; the CXCL12:HMGB1 complex triggers CXCR4 homodimerization. Induces the migration of monocyte-derived immature dendritic cells and seems to regulate adhesive and migratory functions of neutrophils implicating AGER/RAGE and ITGAM. Can bind to various types of DNA and RNA including microbial unmethylated CpG-DNA to enhance the innate immune response to nucleic acids. Proposed to act in promiscuous DNA/RNA sensing which cooperates with subsequent discriminative sensing by specific pattern recognition receptors. Promotes extracellular DNA-induced AIM2 inflammasome activation implicating AGER/RAGE. Disulfide HMGB1 binds to transmembrane receptors, such as AGER/RAGE, TLR2, TLR4 and probably TREM1, thus activating their signal transduction pathways. Mediates the release of cytokines/chemokines such as TNF, IL-1, IL-6, IL-8, CCL2, CCL3, CCL4 and CXCL10. Promotes secretion of interferon-gamma by macrophage-stimulated natural killer (NK) cells in concert with other cytokines like IL-2 or IL-12. TLR4 is proposed to be the primary receptor promoting macrophage activation and signaling through TLR4 seems to implicate LY96/MD-2. In bacterial LPS- or LTA-mediated inflammatory responses binds to the endotoxins and transfers them to CD14 for signaling to the respective TLR4:LY96 and TLR2 complexes. Contributes to tumor proliferation by association with ACER/RAGE. Can bind to IL1-beta and signals through the IL1R1:IL1RAP receptor complex. Binding to class A CpG activates cytokine production in plasmacytoid dendritic cells implicating TLR9, MYD88 and AGER/RAGE and can activate autoreactive B cells. Via HMGB1-containing chromatin immune complexes may also promote B cell responses to endogenous TLR9 ligands through a B-cell receptor (BCR)-dependent and ACER/RAGE-independent mechanism. Inhibits phagocytosis of apoptotic cells by macrophages; the function is dependent on poly-ADP-ribosylation and involves binding to phosphatidylserine on the cell surface of apoptotic cells. In adaptive immunity may be involved in enhancing immunity through activation of effector T-cells and suppression of regulatory T (TReg) cells. In contrast, without implicating effector or regulatory T-cells, required for tumor infiltration and activation of T-cells expressing the lymphotoxin LTA:LTB heterotrimer thus promoting tumor malignant progression. Also reported to limit proliferation of T-cells. Released HMGB1:nucleosome complexes formed during apoptosis can signal through TLR2 to induce cytokine production. Involved in induction of immunological tolerance by apoptotic cells; its pro-inflammatory activities when released by apoptotic cells are neutralized by reactive oxygen species (ROS)-dependent oxidation specifically on Cys-106. During macrophage activation by activated lymphocyte-derived self apoptotic DNA (ALD-DNA) promotes recruitment of ALD-DNA to endosomes. The polypeptide is High mobility group protein B1 (HMGB1) (Bos taurus (Bovine)).